The sequence spans 312 residues: uncharacterized protein (312 aa).

The protein resides in the mitochondrion. This is an uncharacterized protein from Schizosaccharomyces pombe (strain 972 / ATCC 24843) (Fission yeast).